Reading from the N-terminus, the 193-residue chain is Corrinoid adenosyltransferase (193 aa).

ATP contacts are provided by residues 10-18 (TRTGDDGTT), lysine 28, 137-142 (RRAERS), and asparagine 163.

Belongs to the Cob(I)alamin adenosyltransferase family.

Its subcellular location is the cytoplasm. The catalysed reaction is 2 cob(II)yrinate a,c diamide + reduced [electron-transfer flavoprotein] + 2 ATP = 2 adenosylcob(III)yrinate a,c-diamide + 2 triphosphate + oxidized [electron-transfer flavoprotein] + 3 H(+). It catalyses the reaction 2 cob(II)alamin + reduced [electron-transfer flavoprotein] + 2 ATP = 2 adenosylcob(III)alamin + 2 triphosphate + oxidized [electron-transfer flavoprotein] + 3 H(+). Its pathway is cofactor biosynthesis; adenosylcobalamin biosynthesis; adenosylcobalamin from cob(II)yrinate a,c-diamide: step 2/7. The chain is Corrinoid adenosyltransferase from Mycobacterium bovis (strain ATCC BAA-935 / AF2122/97).